A 149-amino-acid chain; its full sequence is UPF0178 protein SE_0451 (149 aa).

It belongs to the UPF0178 family.

This is UPF0178 protein SE_0451 from Staphylococcus epidermidis (strain ATCC 12228 / FDA PCI 1200).